The following is a 405-amino-acid chain: CRS2-associated factor 1, mitochondrial (405 aa).

A mitochondrion-targeting transit peptide spans 1 to 20 (MFLIRLSRHNPSSFTLLTRR). Positions 32–75 (RDLYNFQSPPPLSSSASENPDFNQKNNNKKKPKPQYRPPSSLEG) are disordered. CRM domains follow at residues 157 to 255 (ASLT…KRPK) and 277 to 373 (DGLS…KEDD). The disordered stretch occupies residues 384–405 (SIDSDVDLSCSRGAQDSPDETT).

In terms of assembly, part of large ribonucleo-protein complexes that include group IIB introns.

The protein localises to the mitochondrion. In terms of biological role, may be involved in the splicing of group IIB introns in mitochondria. The protein is CRS2-associated factor 1, mitochondrial of Arabidopsis thaliana (Mouse-ear cress).